Here is a 142-residue protein sequence, read N- to C-terminus: Nucleoside diphosphate kinase (142 aa).

ATP-binding residues include K11, F59, R87, T93, R104, and N114. H117 serves as the catalytic Pros-phosphohistidine intermediate.

Belongs to the NDK family. As to quaternary structure, homotetramer. Mg(2+) serves as cofactor.

Its subcellular location is the cytoplasm. It carries out the reaction a 2'-deoxyribonucleoside 5'-diphosphate + ATP = a 2'-deoxyribonucleoside 5'-triphosphate + ADP. It catalyses the reaction a ribonucleoside 5'-diphosphate + ATP = a ribonucleoside 5'-triphosphate + ADP. Its function is as follows. Major role in the synthesis of nucleoside triphosphates other than ATP. The ATP gamma phosphate is transferred to the NDP beta phosphate via a ping-pong mechanism, using a phosphorylated active-site intermediate. In Thiobacillus denitrificans (strain ATCC 25259 / T1), this protein is Nucleoside diphosphate kinase.